Reading from the N-terminus, the 192-residue chain is NADH:FMN oxidoreductase (192 aa).

A disordered region spans residues 1–20; it reads MSDKPNAVSSHTTPDVPEVA. Residues 60 to 63, 77 to 84, alanine 111, and arginine 117 each bind FMN; these read TATS and NIAETSSS.

The protein belongs to the non-flavoprotein flavin reductase family.

Its subcellular location is the cytoplasm. It carries out the reaction FMNH2 + NAD(+) = FMN + NADH + 2 H(+). Its pathway is sulfur metabolism; dibenzothiophene degradation. In terms of biological role, an NADH:FMN oxidoreductase which supplies reduced FMN for the '4S' desulfurization pathway that removes covalently bound sulfur from dibenzothiophene (DBT) without breaking carbon-carbon bonds. Provides DszA and DszC (DBTO2-monooxygenase and DBT-monooxygenase respectively) with reduced flavin (FMN). In Rhodococcus erythropolis (Arthrobacter picolinophilus), this protein is NADH:FMN oxidoreductase.